A 497-amino-acid chain; its full sequence is L-arabinose isomerase (497 aa).

4 residues coordinate Mn(2+): Glu306, Glu333, His349, and His448.

Belongs to the arabinose isomerase family. Mn(2+) is required as a cofactor.

It catalyses the reaction beta-L-arabinopyranose = L-ribulose. The protein operates within carbohydrate degradation; L-arabinose degradation via L-ribulose; D-xylulose 5-phosphate from L-arabinose (bacterial route): step 1/3. In terms of biological role, catalyzes the conversion of L-arabinose to L-ribulose. This Vibrio parahaemolyticus serotype O3:K6 (strain RIMD 2210633) protein is L-arabinose isomerase.